We begin with the raw amino-acid sequence, 621 residues long: Chaperone protein HscA homolog (621 aa).

The protein belongs to the heat shock protein 70 family.

Functionally, chaperone involved in the maturation of iron-sulfur cluster-containing proteins. Has a low intrinsic ATPase activity which is markedly stimulated by HscB. The sequence is that of Chaperone protein HscA homolog from Acidithiobacillus ferrooxidans (strain ATCC 23270 / DSM 14882 / CIP 104768 / NCIMB 8455) (Ferrobacillus ferrooxidans (strain ATCC 23270)).